The chain runs to 601 residues: Probable N-acetylgalactosaminyltransferase 7 (601 aa).

Topologically, residues 1–20 (MIIARKKLQLQRLWRQRGCR) are cytoplasmic. The chain crosses the membrane as a helical; Signal-anchor for type II membrane protein span at residues 21–38 (VATYICLGVLVLFGFVYN). At 39–601 (SKGNSMSSIK…FVWKEFYQSS (563 aa)) the chain is on the lumenal side. Residues 61–108 (DLTNKELPGGPDPNTIFRGSELGNYEPKEPEIPSNQPGEHGKPVPVTD) are disordered. N135 is a glycosylation site (N-linked (GlcNAc...) asparagine). 5 disulfides stabilise this stretch: C146–C382, C373–C452, C490–C506, C529–C542, and C568–C583. Positions 155–265 (LPTVSVVVVF…TNWLPPLLAP (111 aa)) are catalytic subdomain A. D196 and R226 together coordinate substrate. D249 and H251 together coordinate Mn(2+). The tract at residues 328 to 390 (PFRSPTHAGG…PCSHVGHVYR (63 aa)) is catalytic subdomain B. W359 contacts substrate. H387 is a Mn(2+) binding site. Residues R390 and Y395 each coordinate substrate. The region spanning 477–595 (DVWGEARNPA…DNERQKFVWK (119 aa)) is the Ricin B-type lectin domain.

It belongs to the glycosyltransferase 2 family. GalNAc-T subfamily. It depends on Mn(2+) as a cofactor.

It localises to the golgi apparatus membrane. It participates in protein modification; protein glycosylation. Functionally, probable glycopeptide transferase involved in O-linked oligosaccharide biosynthesis. Glycopeptide transferases catalyze the transfer of an N-acetyl-D-galactosamine residue to an already glycosylated peptide. In contrast to other members of the family, it does not act as a peptide transferase that transfers GalNAc onto serine or threonine residue on peptides that have been tested. Some peptide transferase activity is however not excluded, considering that its appropriate peptide substrate may remain unidentified. This chain is Probable N-acetylgalactosaminyltransferase 7 (gly-7), found in Caenorhabditis elegans.